Here is a 411-residue protein sequence, read N- to C-terminus: MLTVLAALSLLSLLTSATGRLAPDELCYAEPRRTGSPPNTQPERPPVIFEPPTIAIKAESKGCELILLDPPIDVSYRREDKVNASIAWFFDFGACRMPIAYREYYGCIGNAVPSPETCDAYSFTLIRTEGIVEFTIVNMSLLFQPGIYDSGNFIYSVLLDYHIFTGRVTLEVEKDTNYPCGMIHGLTAYGNINVDETMDNASPHPRAVGCFPEPIDNEAWANVTFTELGIPDPNSFLDDEGDYPNISDCHSWESYTYPNTLRQATGPQTLLVGAVGLRILAQAWKFVGDETYDTIRAEAKNLETHVPSSAAESSLENQSTQEESNSPEVAHLRSVNSDDSTHTGGASNGIQDCDSQLKTVYACLALIGLGTCAMIGLIVYICVLRSKLSSRNFSRAQNVKHRNYQRLEYVA.

The N-terminal stretch at 1 to 19 is a signal peptide; that stretch reads MLTVLAALSLLSLLTSATG. N-linked (GlcNAc...) asparagine; by host glycosylation is found at asparagine 83, asparagine 138, asparagine 222, asparagine 245, and asparagine 317. Polar residues-rich tracts occupy residues 306-327 and 334-345; these read VPSS…SNSP and SVNSDDSTHTGG. Residues 306-345 form a disordered region; that stretch reads VPSSAAESSLENQSTQEESNSPEVAHLRSVNSDDSTHTGG. The helical transmembrane segment at 363-379 threads the bilayer; it reads CLALIGLGTCAMIGLIV. A glycan (N-linked (GlcNAc...) asparagine; by host) is linked at asparagine 392.

This sequence belongs to the alphaherpesvirinae glycoprotein G family.

The protein resides in the virion membrane. In terms of biological role, chemokine-binding protein that inhibits neutrophils' chemotaxis. The polypeptide is Envelope glycoprotein G (gG) (Equus caballus (Horse)).